Here is a 534-residue protein sequence, read N- to C-terminus: Blue-light-activated protein (534 aa).

The PAS domain maps to 20–93 (GKDIFFAAVE…QSIRDAIAQR (74 aa)). Cys-70 is subject to S-4a-FMN cysteine. The 55-residue stretch at 94–148 (NDISAEIINYRKDGSSFWNALFISPVYNDAGDLIYFFASQLDISRRKDAEEALRQ) folds into the PAC domain. Residues 161–390 (GIAHDFNNLL…TLRLYFPVDE (230 aa)) form the Histidine kinase domain. Position 164 is a phosphohistidine; by autocatalysis (His-164). In terms of domain architecture, Response regulatory spans 411–527 (RILIVEDRPD…DLARKVRQVL (117 aa)). Asp-461 carries the 4-aspartylphosphate modification.

In terms of processing, FMN binds covalently to cysteine after exposure to blue light and this bond is spontaneously broken in the dark.

It catalyses the reaction ATP + protein L-histidine = ADP + protein N-phospho-L-histidine.. Functionally, photosensitive kinase and response regulator that is involved in increased bacterial virulence upon exposure to light. This chain is Blue-light-activated protein, found in Pseudomonas syringae pv. tomato (strain ATCC BAA-871 / DC3000).